The sequence spans 84 residues: Small ribosomal subunit protein bS18A (84 aa).

It belongs to the bacterial ribosomal protein bS18 family. As to quaternary structure, part of the 30S ribosomal subunit. Forms a tight heterodimer with protein bS6.

Binds as a heterodimer with protein bS6 to the central domain of the 16S rRNA, where it helps stabilize the platform of the 30S subunit. The chain is Small ribosomal subunit protein bS18A from Mycobacterium marinum (strain ATCC BAA-535 / M).